We begin with the raw amino-acid sequence, 1096 residues long: MCLTKDLNLLGSYETGFDMEKSIYNILTIDRWGSLNHMDYRQARLRLVHGKLALKFLKWVVKQPGLETDHIVQLVCITTHILVRARMYDPARHILKELSLMSGKSSFVFGALMTTYRLCNSNPSVYDILIRVYLREGMIQDSLEIFRLMGLYGFNPSVYTCNAILGSVVKSGEDVSVWSFLKEMLKRKICPDVATFNILINVLCAEGSFEKSSYLMQKMEKSGYAPTIVTYNTVLHWYCKKGRFKAAIELLDHMKSKGVDADVCTYNMLIHDLCRSNRIAKGYLLLRDMRKRMIHPNEVTYNTLINGFSNEGKVLIASQLLNEMLSFGLSPNHVTFNALIDGHISEGNFKEALKMFYMMEAKGLTPSEVSYGVLLDGLCKNAEFDLARGFYMRMKRNGVCVGRITYTGMIDGLCKNGFLDEAVVLLNEMSKDGIDPDIVTYSALINGFCKVGRFKTAKEIVCRIYRVGLSPNGIIYSTLIYNCCRMGCLKEAIRIYEAMILEGHTRDHFTFNVLVTSLCKAGKVAEAEEFMRCMTSDGILPNTVSFDCLINGYGNSGEGLKAFSVFDEMTKVGHHPTFFTYGSLLKGLCKGGHLREAEKFLKSLHAVPAAVDTVMYNTLLTAMCKSGNLAKAVSLFGEMVQRSILPDSYTYTSLISGLCRKGKTVIAILFAKEAEARGNVLPNKVMYTCFVDGMFKAGQWKAGIYFREQMDNLGHTPDIVTTNAMIDGYSRMGKIEKTNDLLPEMGNQNGGPNLTTYNILLHGYSKRKDVSTSFLLYRSIILNGILPDKLTCHSLVLGICESNMLEIGLKILKAFICRGVEVDRYTFNMLISKCCANGEINWAFDLVKVMTSLGISLDKDTCDAMVSVLNRNHRFQESRMVLHEMSKQGISPESRKYIGLINGLCRVGDIKTAFVVKEEMIAHKICPPNVAESAMVRALAKCGKADEATLLLRFMLKMKLVPTIASFTTLMHLCCKNGNVIEALELRVVMSNCGLKLDLVSYNVLITGLCAKGDMALAFELYEEMKGDGFLANATTYKALIRGLLARETAFSGADIILKDLLARGFITSMSLSQDSHRNLKMAMEKLKALQSNKKD.

PPR repeat units follow at residues 122 to 156 (NPSV…GFNP), 157 to 191 (SVYT…KICP), 192 to 226 (DVAT…GYAP), 227 to 261 (TIVT…GVDA), 262 to 296 (DVCT…MIHP), 297 to 331 (NEVT…GLSP), 332 to 366 (NHVT…GLTP), 367 to 401 (SEVS…GVCV), 402 to 436 (GRIT…GIDP), 437 to 471 (DIVT…GLSP), 472 to 506 (NGII…GHTR), 507 to 541 (DHFT…GILP), 542 to 576 (NTVS…GHHP), 577 to 607 (TFFT…LHAV), 612 to 646 (DTVM…SILP), 647 to 681 (DSYT…GNVL), 683 to 717 (NKVM…GHTP), 718 to 752 (DIVT…NGGP), 753 to 787 (NLTT…GILP), 788 to 822 (DKLT…GVEV), 823 to 857 (DRYT…GISL), 858 to 892 (DKDT…GISP), 893 to 927 (ESRK…KICP), 928 to 962 (PNVA…KLVP), 963 to 997 (TIAS…GLKL), 998 to 1032 (DLVS…GFLA), and 1033 to 1068 (NATT…GFIT).

It belongs to the PPR family. P subfamily.

This chain is Pentatricopeptide repeat-containing protein At5g55840, found in Arabidopsis thaliana (Mouse-ear cress).